The primary structure comprises 386 residues: Succinate--CoA ligase [ADP-forming] subunit beta (386 aa).

Positions 9–237 (KEVLRDFGVN…LSAEHPLEVE (229 aa)) constitute an ATP-grasp domain. Residues K45, 52-54 (GRG), V94, and E101 contribute to the ATP site. Mg(2+)-binding residues include N192 and D206. Substrate is bound by residues N258 and 315-317 (GIT).

It belongs to the succinate/malate CoA ligase beta subunit family. In terms of assembly, heterotetramer of two alpha and two beta subunits. Requires Mg(2+) as cofactor.

The catalysed reaction is succinate + ATP + CoA = succinyl-CoA + ADP + phosphate. It catalyses the reaction GTP + succinate + CoA = succinyl-CoA + GDP + phosphate. It participates in carbohydrate metabolism; tricarboxylic acid cycle; succinate from succinyl-CoA (ligase route): step 1/1. Its function is as follows. Succinyl-CoA synthetase functions in the citric acid cycle (TCA), coupling the hydrolysis of succinyl-CoA to the synthesis of either ATP or GTP and thus represents the only step of substrate-level phosphorylation in the TCA. The beta subunit provides nucleotide specificity of the enzyme and binds the substrate succinate, while the binding sites for coenzyme A and phosphate are found in the alpha subunit. The sequence is that of Succinate--CoA ligase [ADP-forming] subunit beta from Deinococcus radiodurans (strain ATCC 13939 / DSM 20539 / JCM 16871 / CCUG 27074 / LMG 4051 / NBRC 15346 / NCIMB 9279 / VKM B-1422 / R1).